The sequence spans 235 residues: Purine nucleoside phosphorylase DeoD-type (235 aa).

Residue histidine 4 coordinates a purine D-ribonucleoside. Phosphate is bound by residues glycine 20, arginine 24, arginine 43, and 87–90 (RVGT). A purine D-ribonucleoside is bound by residues glutamate 162, 179-181 (EME), and 203-204 (SD). Aspartate 204 functions as the Proton donor in the catalytic mechanism.

Belongs to the PNP/UDP phosphorylase family. In terms of assembly, homohexamer; trimer of homodimers.

It carries out the reaction a purine D-ribonucleoside + phosphate = a purine nucleobase + alpha-D-ribose 1-phosphate. The catalysed reaction is a purine 2'-deoxy-D-ribonucleoside + phosphate = a purine nucleobase + 2-deoxy-alpha-D-ribose 1-phosphate. Catalyzes the reversible phosphorolytic breakdown of the N-glycosidic bond in the beta-(deoxy)ribonucleoside molecules, with the formation of the corresponding free purine bases and pentose-1-phosphate. The chain is Purine nucleoside phosphorylase DeoD-type from Bacillus cytotoxicus (strain DSM 22905 / CIP 110041 / 391-98 / NVH 391-98).